Here is a 229-residue protein sequence, read N- to C-terminus: Urease accessory protein UreF (229 aa).

The protein belongs to the UreF family. UreD, UreF and UreG form a complex that acts as a GTP-hydrolysis-dependent molecular chaperone, activating the urease apoprotein by helping to assemble the nickel containing metallocenter of UreC. The UreE protein probably delivers the nickel.

The protein localises to the cytoplasm. Functionally, required for maturation of urease via the functional incorporation of the urease nickel metallocenter. This chain is Urease accessory protein UreF, found in Staphylococcus epidermidis (strain ATCC 35984 / DSM 28319 / BCRC 17069 / CCUG 31568 / BM 3577 / RP62A).